The chain runs to 223 residues: Probable chemoreceptor glutamine deamidase CheD (223 aa).

Residues 189–223 (QTASAKAHTPPQIERFSAPAKPRFERFTRPSTATS) form a disordered region.

Belongs to the CheD family.

It catalyses the reaction L-glutaminyl-[protein] + H2O = L-glutamyl-[protein] + NH4(+). Probably deamidates glutamine residues to glutamate on methyl-accepting chemotaxis receptors (MCPs), playing an important role in chemotaxis. This is Probable chemoreceptor glutamine deamidase CheD from Bordetella petrii (strain ATCC BAA-461 / DSM 12804 / CCUG 43448).